We begin with the raw amino-acid sequence, 208 residues long: Probable GTP-binding protein EngB (208 aa).

The 183-residue stretch at 23–205 folds into the EngB-type G domain; it reads LTSEMVILGR…RQTLLKYLLT (183 aa). GTP contacts are provided by residues 31 to 38, 57 to 61, 84 to 87, 154 to 157, and 182 to 184; these read GRSNVGKS, GKTRL, DLPG, TKFD, and FNA. Ser38 and Thr59 together coordinate Mg(2+).

The protein belongs to the TRAFAC class TrmE-Era-EngA-EngB-Septin-like GTPase superfamily. EngB GTPase family. Requires Mg(2+) as cofactor.

Necessary for normal cell division and for the maintenance of normal septation. The polypeptide is Probable GTP-binding protein EngB (Helicobacter pylori (strain P12)).